A 40-amino-acid polypeptide reads, in one-letter code: Photosystem II reaction center protein J (40 aa).

Residues 8-28 (IPLWMIGTLAGILVISLIGIF) traverse the membrane as a helical segment.

The protein belongs to the PsbJ family. As to quaternary structure, PSII is composed of 1 copy each of membrane proteins PsbA, PsbB, PsbC, PsbD, PsbE, PsbF, PsbH, PsbI, PsbJ, PsbK, PsbL, PsbM, PsbT, PsbX, PsbY, PsbZ, Psb30/Ycf12, at least 3 peripheral proteins of the oxygen-evolving complex and a large number of cofactors. It forms dimeric complexes.

It localises to the plastid membrane. In terms of biological role, one of the components of the core complex of photosystem II (PSII). PSII is a light-driven water:plastoquinone oxidoreductase that uses light energy to abstract electrons from H(2)O, generating O(2) and a proton gradient subsequently used for ATP formation. It consists of a core antenna complex that captures photons, and an electron transfer chain that converts photonic excitation into a charge separation. This chain is Photosystem II reaction center protein J, found in Cuscuta gronovii (Common dodder).